Here is a 156-residue protein sequence, read N- to C-terminus: Large ribosomal subunit protein uL13 (156 aa).

It belongs to the universal ribosomal protein uL13 family. In terms of assembly, part of the 50S ribosomal subunit.

In terms of biological role, this protein is one of the early assembly proteins of the 50S ribosomal subunit, although it is not seen to bind rRNA by itself. It is important during the early stages of 50S assembly. The polypeptide is Large ribosomal subunit protein uL13 (Archaeoglobus fulgidus (strain ATCC 49558 / DSM 4304 / JCM 9628 / NBRC 100126 / VC-16)).